The following is a 159-amino-acid chain: Photosystem II extrinsic protein U, chloroplastic (159 aa).

Belongs to the PsbU family. PSII is composed of 1 copy each of membrane proteins PsbA, PsbB, PsbC, PsbD, PsbE, PsbF, PsbH, PsbI, PsbJ, PsbK, PsbL, PsbM, PsbT, PsbX, PsbY, PsbZ, Psb30/Ycf12, at least 3 peripheral proteins of the oxygen-evolving complex and a large number of cofactors. It forms dimeric complexes. Part of the oxygen-evolving complex of photosystem II.

Its subcellular location is the plastid. The protein resides in the chloroplast thylakoid membrane. In terms of biological role, one of the extrinsic, lumenal subunits of photosystem II (PSII). PSII is a light-driven water plastoquinone oxidoreductase, using light energy to abstract electrons from H(2)O, generating a proton gradient subsequently used for ATP formation. The extrinsic proteins stabilize the structure of photosystem II oxygen-evolving complex (OEC), the ion environment of oxygen evolution and protect the OEC against heat-induced inactivation. The chain is Photosystem II extrinsic protein U, chloroplastic from Karenia brevis (Red tide dinoflagellate).